We begin with the raw amino-acid sequence, 551 residues long: Palmdelphin (551 aa).

At Met1 the chain carries N-acetylmethionine. The stretch at Glu2–Ile106 forms a coiled coil. Lys125 is covalently cross-linked (Glycyl lysine isopeptide (Lys-Gly) (interchain with G-Cter in SUMO2)). A Phosphoserine modification is found at Ser135. Lys179 is covalently cross-linked (Glycyl lysine isopeptide (Lys-Gly) (interchain with G-Cter in SUMO1); alternate). Lys179 is covalently cross-linked (Glycyl lysine isopeptide (Lys-Gly) (interchain with G-Cter in SUMO2); alternate). Residues Ser247 to Asp259 show a composition bias toward basic and acidic residues. Disordered stretches follow at residues Ser247 to Glu393 and Glu450 to Asp529. The residue at position 271 (Thr271) is a Phosphothreonine. Residues Ser321, Ser370, Ser384, and Ser385 each carry the phosphoserine modification. Basic and acidic residues predominate over residues Lys484–Asn495. Ser498, Ser515, and Ser520 each carry phosphoserine.

The protein belongs to the paralemmin family. As to quaternary structure, interacts with GLUL. Cell projection, dendrite. Cell projection, dendritic spine. In terms of processing, phosphorylated.

It is found in the cytoplasm. It localises to the cell projection. The protein localises to the dendrite. Its subcellular location is the dendritic spine. In Sus scrofa (Pig), this protein is Palmdelphin (PALMD).